The chain runs to 180 residues: Adenine phosphoribosyltransferase (180 aa).

This sequence belongs to the purine/pyrimidine phosphoribosyltransferase family. Homodimer.

It is found in the cytoplasm. It carries out the reaction AMP + diphosphate = 5-phospho-alpha-D-ribose 1-diphosphate + adenine. It functions in the pathway purine metabolism; AMP biosynthesis via salvage pathway; AMP from adenine: step 1/1. Catalyzes a salvage reaction resulting in the formation of AMP, that is energically less costly than de novo synthesis. The polypeptide is Adenine phosphoribosyltransferase (Haemophilus influenzae (strain PittEE)).